Reading from the N-terminus, the 776-residue chain is Serine/threonine-protein kinase-like protein CCR2 (776 aa).

A signal peptide spans 1 to 22; it reads MQPNSHIFVIITISSLIITVSA. Residues 23-432 are Extracellular-facing; the sequence is YGSTGTIAAA…QKEQREVRRL (410 aa). N-linked (GlcNAc...) asparagine glycosylation is found at N59, N92, N154, N162, N205, N278, N287, and N350. The TNFR-Cys repeat unit spans residues 341–396; that stretch reads NCGDGWFAFNASILKESELTSLCSFHNLNICLRCGISCLEGYFPSSTCNPNADRVC. Disulfide bonds link C342-C371, C374-C388, and C378-C396. The N-linked (GlcNAc...) asparagine glycan is linked to N404. A helical transmembrane segment spans residues 433 to 453; sequence VIIIGCSVLGFLVMLIGLSFI. Over 454–776 the chain is Cytoplasmic; the sequence is PKMTKGSKRD…DLIVKSGLTF (323 aa). The Protein kinase domain maps to 519 to 776; that stretch reads FKEFNELGRG…DLIVKSGLTF (258 aa). Residues 525-533 and K547 contribute to the ATP site; that span reads LGRGSFGFV. Catalysis depends on D644, which acts as the Proton acceptor.

The protein belongs to the protein kinase superfamily. Ser/Thr protein kinase family. In terms of assembly, homodimer. In terms of tissue distribution, expressed in roots, leaves, shoot apical meristems (SAM), and floral buds.

The protein resides in the membrane. The enzyme catalyses L-seryl-[protein] + ATP = O-phospho-L-seryl-[protein] + ADP + H(+). It catalyses the reaction L-threonyl-[protein] + ATP = O-phospho-L-threonyl-[protein] + ADP + H(+). Its function is as follows. Serine/threonine-protein kinase with low activity. This is Serine/threonine-protein kinase-like protein CCR2 (CCR2) from Arabidopsis thaliana (Mouse-ear cress).